The chain runs to 429 residues: MSKSLQAIRGMNDILPEQTPVWRYFEGTVSRLLDNYGYKQIRMPIVEFTELFKRSIGEVTDIVEKEMYTFEDRNGDSLTLRPEGTAACVRAVLEHGITGGGQVQKLWYIGPMFRHERPQKGRYRQFHQIGLEVFNLDGPDIDAELIIMTWRLWGELGIRDAVKLELNSLGTSESRGRYREALVEYLSAHHDKLDEDSQRRLKTNPLRVLDTKNADTQAVLVDAPKMADYLDDESRAHFKGLKARLDAVGIPYVLNPKLVRGLDYYSKTVFEWVTDKLGAQGTVCAGGRYDGLVEQMGGKPTPGVGFAMGIERLVLLLETLEQIPEEISRQVDVYLCAFGEEAELAGLALAERVRDQLPNLRLQVNAGAGSFKSQFKKADKSGALYALILGDDEMAQQVVGFKPLRGQGEQQSIAWDALAAHLATCVVQG.

Belongs to the class-II aminoacyl-tRNA synthetase family. Homodimer.

It is found in the cytoplasm. It catalyses the reaction tRNA(His) + L-histidine + ATP = L-histidyl-tRNA(His) + AMP + diphosphate + H(+). The polypeptide is Histidine--tRNA ligase (Pseudomonas fluorescens (strain Pf0-1)).